The chain runs to 546 residues: Chaperonin GroEL 1 (546 aa).

ATP is bound by residues 30–33 (TLGP), Lys51, 87–91 (DGTTT), Gly415, 479–481 (NAA), and Asp495.

Belongs to the chaperonin (HSP60) family. As to quaternary structure, forms a cylinder of 14 subunits composed of two heptameric rings stacked back-to-back. Interacts with the co-chaperonin GroES.

The protein localises to the cytoplasm. It carries out the reaction ATP + H2O + a folded polypeptide = ADP + phosphate + an unfolded polypeptide.. Functionally, together with its co-chaperonin GroES, plays an essential role in assisting protein folding. The GroEL-GroES system forms a nano-cage that allows encapsulation of the non-native substrate proteins and provides a physical environment optimized to promote and accelerate protein folding. This Vibrio vulnificus (strain CMCP6) protein is Chaperonin GroEL 1.